A 260-amino-acid chain; its full sequence is Ubiquinone/menaquinone biosynthesis C-methyltransferase UbiE (260 aa).

S-adenosyl-L-methionine is bound by residues threonine 83, aspartate 104, and 132–133; that span reads NA.

The protein belongs to the class I-like SAM-binding methyltransferase superfamily. MenG/UbiE family.

The enzyme catalyses a 2-demethylmenaquinol + S-adenosyl-L-methionine = a menaquinol + S-adenosyl-L-homocysteine + H(+). It catalyses the reaction a 2-methoxy-6-(all-trans-polyprenyl)benzene-1,4-diol + S-adenosyl-L-methionine = a 5-methoxy-2-methyl-3-(all-trans-polyprenyl)benzene-1,4-diol + S-adenosyl-L-homocysteine + H(+). It participates in quinol/quinone metabolism; menaquinone biosynthesis; menaquinol from 1,4-dihydroxy-2-naphthoate: step 2/2. The protein operates within cofactor biosynthesis; ubiquinone biosynthesis. Functionally, methyltransferase required for the conversion of demethylmenaquinol (DMKH2) to menaquinol (MKH2) and the conversion of 2-polyprenyl-6-methoxy-1,4-benzoquinol (DDMQH2) to 2-polyprenyl-3-methyl-6-methoxy-1,4-benzoquinol (DMQH2). The polypeptide is Ubiquinone/menaquinone biosynthesis C-methyltransferase UbiE (Bartonella tribocorum (strain CIP 105476 / IBS 506)).